A 74-amino-acid polypeptide reads, in one-letter code: uncharacterized protein (74 aa).

This is an uncharacterized protein from Methanocaldococcus jannaschii (strain ATCC 43067 / DSM 2661 / JAL-1 / JCM 10045 / NBRC 100440) (Methanococcus jannaschii).